Reading from the N-terminus, the 397-residue chain is UPF0597 protein Tmel_1007 (397 aa).

Belongs to the UPF0597 family.

This chain is UPF0597 protein Tmel_1007, found in Thermosipho melanesiensis (strain DSM 12029 / CIP 104789 / BI429).